Consider the following 235-residue polypeptide: MKNKIKSLCLIKKKKSGRSRGKISVRHIGKKHKKFYRKIDFKRDKYNIKGIVESIHYDPNRNARIALIKYLDGEKRYIIKTNNLEISNFVVSSLNKISLNSGNSTIIKNINIGTLINCVEIFPKIGGIFSRSSGSESEIIFKDNKFGVIKLPSGIKKKISLNCMATIGKICTFNVKKKLYKAGQNRWRGIRPTVRGVAMNPVDHPHGGGEGKTSGGRHPCSLWGIKTKGYKTKKK.

The disordered stretch occupies residues 197–218; that stretch reads VAMNPVDHPHGGGEGKTSGGRH.

Belongs to the universal ribosomal protein uL2 family. Part of the 50S ribosomal subunit. Forms a bridge to the 30S subunit in the 70S ribosome.

Functionally, one of the primary rRNA binding proteins. Required for association of the 30S and 50S subunits to form the 70S ribosome, for tRNA binding and peptide bond formation. It has been suggested to have peptidyltransferase activity; this is somewhat controversial. Makes several contacts with the 16S rRNA in the 70S ribosome. The polypeptide is Large ribosomal subunit protein uL2 (rplB) (Carsonella ruddii (strain PV)).